Reading from the N-terminus, the 58-residue chain is Bestoxin (58 aa).

Residues 3–58 enclose the LCN-type CS-alpha/beta domain; it reads VPGNYPLDKDGNTYTCLELGENKDCQKVCKLHGVQYGYCYAFSCWCKEYLDDKDSV. 3 disulfide bridges follow: Cys18–Cys41, Cys27–Cys46, and Cys31–Cys48.

Expressed by the venom gland.

It localises to the secreted. Functionally, beta toxins bind voltage-independently at site-4 of sodium channels (Nav) and shift the voltage of activation toward more negative potentials thereby affecting sodium channel activation and promoting spontaneous and repetitive firing. In mice, causes intense writhing. This is Bestoxin from Parabuthus transvaalicus (Transvaal thick-tailed scorpion).